A 60-amino-acid polypeptide reads, in one-letter code: UPF0509 protein ESA_01586 (60 aa).

The protein belongs to the UPF0509 family.

The protein is UPF0509 protein ESA_01586 of Cronobacter sakazakii (strain ATCC BAA-894) (Enterobacter sakazakii).